We begin with the raw amino-acid sequence, 204 residues long: Urease accessory protein UreG (204 aa).

13–20 (GPVGSGKT) contacts GTP.

It belongs to the SIMIBI class G3E GTPase family. UreG subfamily. As to quaternary structure, homodimer. UreD, UreF and UreG form a complex that acts as a GTP-hydrolysis-dependent molecular chaperone, activating the urease apoprotein by helping to assemble the nickel containing metallocenter of UreC. The UreE protein probably delivers the nickel.

It localises to the cytoplasm. Facilitates the functional incorporation of the urease nickel metallocenter. This process requires GTP hydrolysis, probably effectuated by UreG. The polypeptide is Urease accessory protein UreG (Acinetobacter baumannii (strain AB307-0294)).